Here is a 234-residue protein sequence, read N- to C-terminus: Triggering receptor expressed on myeloid cells 1 (234 aa).

A signal peptide spans 1 to 20; the sequence is MRKTRLWGLLWMLFVSELRA. At 21-205 the chain is on the extracellular side; sequence ATKLTEEKYE…TDIIRVPVFN (185 aa). The 109-residue stretch at 26-134 folds into the Ig-like V-type domain; the sequence is EEKYELKEGQ…LFDRIRLVVT (109 aa). An intrachain disulfide couples Cys41 to Cys113. Asn146, Asn191, and Asn194 each carry an N-linked (GlcNAc...) asparagine glycan. The helical transmembrane segment at 206-226 threads the bilayer; it reads IVILLAGGFLSKSLVFSVLFA. Residues 227–234 lie on the Cytoplasmic side of the membrane; the sequence is VTLRSFVP.

As to quaternary structure, monomer. Homomultimer; when activated. Interacts with TYROBP/DAP12. Interacts with TLR4. In terms of processing, glycosylated. In terms of tissue distribution, mostly expressed by immune cells of the myeloid lineage, such as monocytes, macrophages, neutrophils and dendritic cells. Expression is associated with a mature stage of myeloid development. Highly expressed in adult liver, lung and spleen than in corresponding fetal tissue. Also expressed in the lymph node, placenta, spinal cord and heart tissues. Isoform 2 was detected in the lung, liver and mature monocytes.

The protein localises to the cell membrane. It is found in the secreted. Cell surface receptor that plays important roles in innate and adaptive immunity by amplifying inflammatory responses. Upon activation by various ligands such as PGLYRP1, HMGB1 or HSP70, multimerizes and forms a complex with transmembrane adapter TYROBP/DAP12. In turn, initiates a SYK-mediated cascade of tyrosine phosphorylation, activating multiple downstream mediators such as BTK, MAPK1, MAPK3 or phospholipase C-gamma. This cascade promotes the neutrophil- and macrophage-mediated release of pro-inflammatory cytokines and/or chemokines, as well as their migration and thereby amplifies inflammatory responses that are triggered by bacterial and fungal infections. By also promoting the amplification of inflammatory signals that are initially triggered by Toll-like receptor (TLR) and NOD-like receptor engagement, plays a major role in the pathophysiology of acute and chronic inflammatory diseases of different etiologies including septic shock and atherosclerosis. Functionally, acts as a decoy receptor, counterbalancing TREM1 pro-inflammatory activity through the neutralization of its ligand. This chain is Triggering receptor expressed on myeloid cells 1 (TREM1), found in Homo sapiens (Human).